Here is a 145-residue protein sequence, read N- to C-terminus: Putative type I specificity subunit S.MpnORF289P C-terminus (145 aa).

It belongs to the type-I restriction system S methylase family. The methyltransferase is composed of M and S polypeptides.

Functionally, the C-terminal section of a specificity (S) subunit of a type I methyltransferase (MTase); this subunit dictates DNA sequence specificity. The single R subunit has multiple frameshifts and is probably not expressed. This is Putative type I specificity subunit S.MpnORF289P C-terminus from Mycoplasma pneumoniae (strain ATCC 29342 / M129 / Subtype 1) (Mycoplasmoides pneumoniae).